Consider the following 329-residue polypeptide: Minor capsid protein A1 (329 aa).

The disordered stretch occupies residues 143–162; it reads GPSPVPGPNPDPPLEPPPGT. The span at 145–161 shows a compositional bias: pro residues; the sequence is SPVPGPNPDPPLEPPPG.

Its subcellular location is the virion. In terms of biological role, minor capsid protein. The sequence is that of Minor capsid protein A1 from Qbeta virus (strain MX1).